Reading from the N-terminus, the 82-residue chain is UPF0154 protein SPD_1662 (82 aa).

Residues 5–25 (LAIVLIVLAFLGGALGGMYLV) form a helical membrane-spanning segment.

It belongs to the UPF0154 family.

Its subcellular location is the cell membrane. This is UPF0154 protein SPD_1662 from Streptococcus pneumoniae serotype 2 (strain D39 / NCTC 7466).